Here is a 520-residue protein sequence, read N- to C-terminus: 2,3-bisphosphoglycerate-independent phosphoglycerate mutase (520 aa).

Positions 13 and 63 each coordinate Mn(2+). The active-site Phosphoserine intermediate is Ser63. Substrate-binding positions include His124, 154–155 (RD), Arg192, Arg198, 268–271 (RADR), and Lys342. Residues Asp409, His413, Asp450, His451, and His469 each contribute to the Mn(2+) site.

It belongs to the BPG-independent phosphoglycerate mutase family. Monomer. Mn(2+) is required as a cofactor.

It catalyses the reaction (2R)-2-phosphoglycerate = (2R)-3-phosphoglycerate. It functions in the pathway carbohydrate degradation; glycolysis; pyruvate from D-glyceraldehyde 3-phosphate: step 3/5. Its function is as follows. Catalyzes the interconversion of 2-phosphoglycerate and 3-phosphoglycerate. This chain is 2,3-bisphosphoglycerate-independent phosphoglycerate mutase, found in Colwellia psychrerythraea (strain 34H / ATCC BAA-681) (Vibrio psychroerythus).